The following is a 596-amino-acid chain: Inactive metallocarboxypeptidase ECM14 (596 aa).

An N-terminal signal peptide occupies residues 1-22 (MHFSVRLSLFLTLASSLPLVSA). A propeptide spanning residues 23–184 (VPQHEDQAYT…QTIYESYPKA (162 aa)) is cleaved from the precursor. The interval 182–211 (PKAGSASPSQQGPTTRRFSPSASTSKSKPH) is disordered. The segment covering 187-207 (ASPSQQGPTTRRFSPSASTSK) has biased composition (polar residues). The Peptidase M14 domain occupies 220 to 546 (DYQPLSVLLP…RAMVAMGKFL (327 aa)). Histidine 285 and glutamate 288 together coordinate Zn(2+). Substrate-binding positions include 285-288 (HARE), arginine 343, and 360-361 (DH). The cysteines at positions 354 and 377 are disulfide-linked. Asparagine 370 carries an N-linked (GlcNAc...) asparagine glycan. Histidine 417 contributes to the Zn(2+) binding site. 418 to 419 (SY) is a binding site for substrate. Residues 557–596 (DGLRASEEPQDYDNDLEDGEDDKDEQGSTVFRAQADDLQS) form a disordered region. Acidic residues predominate over residues 564–580 (EPQDYDNDLEDGEDDKD). The segment covering 583–596 (GSTVFRAQADDLQS) has biased composition (polar residues).

It belongs to the peptidase M14 family. The cofactor is Zn(2+).

Its subcellular location is the vacuole. The protein localises to the secreted. Inactive carboxypeptidase that may play a role in cell wall organization and biogenesis. The protein is Inactive metallocarboxypeptidase ECM14 (ECM14) of Arthroderma benhamiae (strain ATCC MYA-4681 / CBS 112371) (Trichophyton mentagrophytes).